Reading from the N-terminus, the 249-residue chain is DNA repair protein RecO (249 aa).

The protein belongs to the RecO family.

Its function is as follows. Involved in DNA repair and RecF pathway recombination. The sequence is that of DNA repair protein RecO from Desulforudis audaxviator (strain MP104C).